A 338-amino-acid chain; its full sequence is Ketol-acid reductoisomerase (NADP(+)) (338 aa).

Positions 1 to 181 constitute a KARI N-terminal Rossmann domain; sequence MQVYYDKDCD…GGGRTGIIET (181 aa). NADP(+) is bound by residues 24-27, Arg47, Ser50, Ser52, and 82-85; these read FGSQ and DEFQ. His107 is an active-site residue. Residue Gly133 participates in NADP(+) binding. Residues 182 to 327 form the KARI C-terminal knotted domain; it reads TFKDETETDL…EKLRSMMPWI (146 aa). The Mg(2+) site is built by Asp190, Glu194, Glu226, and Glu230. Residue Ser251 participates in substrate binding.

Belongs to the ketol-acid reductoisomerase family. It depends on Mg(2+) as a cofactor.

It carries out the reaction (2R)-2,3-dihydroxy-3-methylbutanoate + NADP(+) = (2S)-2-acetolactate + NADPH + H(+). The enzyme catalyses (2R,3R)-2,3-dihydroxy-3-methylpentanoate + NADP(+) = (S)-2-ethyl-2-hydroxy-3-oxobutanoate + NADPH + H(+). It participates in amino-acid biosynthesis; L-isoleucine biosynthesis; L-isoleucine from 2-oxobutanoate: step 2/4. The protein operates within amino-acid biosynthesis; L-valine biosynthesis; L-valine from pyruvate: step 2/4. Involved in the biosynthesis of branched-chain amino acids (BCAA). Catalyzes an alkyl-migration followed by a ketol-acid reduction of (S)-2-acetolactate (S2AL) to yield (R)-2,3-dihydroxy-isovalerate. In the isomerase reaction, S2AL is rearranged via a Mg-dependent methyl migration to produce 3-hydroxy-3-methyl-2-ketobutyrate (HMKB). In the reductase reaction, this 2-ketoacid undergoes a metal-dependent reduction by NADPH to yield (R)-2,3-dihydroxy-isovalerate. The protein is Ketol-acid reductoisomerase (NADP(+)) of Marinobacter nauticus (strain ATCC 700491 / DSM 11845 / VT8) (Marinobacter aquaeolei).